A 124-amino-acid chain; its full sequence is Fluoride-specific ion channel FluC (124 aa).

A run of 4 helical transmembrane segments spans residues 3 to 23, 36 to 56, 66 to 86, and 100 to 120; these read YLLV…INTV, TFFI…YFAF, LFLM…SLDA, and LYVL…LALI. Na(+) is bound by residues glycine 74 and threonine 77.

Belongs to the fluoride channel Fluc/FEX (TC 1.A.43) family.

The protein localises to the cell inner membrane. It carries out the reaction fluoride(in) = fluoride(out). With respect to regulation, na(+) is not transported, but it plays an essential structural role and its presence is essential for fluoride channel function. Its function is as follows. Fluoride-specific ion channel. Important for reducing fluoride concentration in the cell, thus reducing its toxicity. This chain is Fluoride-specific ion channel FluC, found in Rhodopseudomonas palustris (strain BisB5).